The primary structure comprises 221 residues: Adenylate kinase (221 aa).

10–15 (GAGKGT) lines the ATP pocket. The interval 30–59 (STGDMLRAAVKAGTPLGVEAKKVMDAGGLV) is NMP. AMP-binding positions include Thr31, Arg36, 57–59 (GLV), 85–88 (GFPR), and Gln92. The LID stretch occupies residues 122–159 (GRRVHVASGRTYHLKYNPPKTEGVDDETGEPLIQRDDD). ATP is bound by residues Arg123 and 132 to 133 (TY). A disordered region spans residues 138 to 159 (NPPKTEGVDDETGEPLIQRDDD). The AMP site is built by Arg156 and Arg167. Gly207 contributes to the ATP binding site.

The protein belongs to the adenylate kinase family. As to quaternary structure, monomer.

The protein localises to the cytoplasm. It carries out the reaction AMP + ATP = 2 ADP. It participates in purine metabolism; AMP biosynthesis via salvage pathway; AMP from ADP: step 1/1. Catalyzes the reversible transfer of the terminal phosphate group between ATP and AMP. Plays an important role in cellular energy homeostasis and in adenine nucleotide metabolism. The sequence is that of Adenylate kinase from Cupriavidus taiwanensis (strain DSM 17343 / BCRC 17206 / CCUG 44338 / CIP 107171 / LMG 19424 / R1) (Ralstonia taiwanensis (strain LMG 19424)).